An 82-amino-acid polypeptide reads, in one-letter code: Translational regulator CsrA (82 aa).

This sequence belongs to the CsrA/RsmA family. Homodimer; the beta-strands of each monomer intercalate to form a hydrophobic core, while the alpha-helices form wings that extend away from the core.

Its subcellular location is the cytoplasm. In terms of biological role, a translational regulator that binds mRNA to regulate translation initiation and/or mRNA stability. Usually binds in the 5'-UTR at or near the Shine-Dalgarno sequence preventing ribosome-binding, thus repressing translation. Its main target seems to be the major flagellin gene, while its function is anatagonized by FliW. In Brachyspira hyodysenteriae (strain ATCC 49526 / WA1), this protein is Translational regulator CsrA.